We begin with the raw amino-acid sequence, 3658 residues long: E3 ubiquitin-protein ligase UPL2 (3658 aa).

Residues 884 to 893 (DEKKSVDRAS) show a composition bias toward basic and acidic residues. Positions 884–914 (DEKKSVDRASDNSVSASSSTAERESDEDSSN) are disordered. The segment covering 894–903 (DNSVSASSST) has biased composition (low complexity). The UBA domain maps to 1271 to 1312 (QPDEAIVGMIVEMGFSRSRAEDALRRVGTNSVEMAMDWLFTN). In terms of domain architecture, UIM spans 1318 to 1337 (QEDDELAQALALSLGNSSET). Disordered stretches follow at residues 1331–1360 (LGNS…KEPP), 1702–1733 (VSGS…SKSH), 2004–2038 (AEQL…VDEL), 2052–2072 (VDNG…RGSS), 2113–2204 (HVED…DDMV), 2293–2313 (PLFS…SAGS), 2417–2487 (ERET…EGGG), 2503–2591 (SAQG…PEVN), and 2958–2987 (SPSS…AESE). Residues 1338 to 1347 (PKLEDTEKPV) are compositionally biased toward basic and acidic residues. The segment covering 2007–2027 (LKSEVPNEQKNTDSDERHDSH) has biased composition (basic and acidic residues). Positions 2028–2038 (GTSTSTEVDEL) are enriched in polar residues. Composition is skewed to acidic residues over residues 2117-2144 (RADD…DSVE) and 2156-2204 (DVED…DDMV). The span at 2297-2313 (RPSQTGNTASVSASAGS) shows a compositional bias: polar residues. A compositionally biased stretch (low complexity) spans 2422–2431 (TTEVQEQQQP). Residues 2503 to 2518 (SAQGQSDTSGIQNVSV) are compositionally biased toward polar residues. The residue at position 2582 (S2582) is a Phosphoserine. The 342-residue stretch at 3317 to 3658 (SPQDLKGRLN…HEANEGFGFA (342 aa)) folds into the HECT domain. C3625 (glycyl thioester intermediate) is an active-site residue.

The protein belongs to the UPL family. TOM1/PTR1 subfamily. Widely expressed. Expressed in root, stem, cauline and rosette leaf, seedling and flower (at protein level).

It catalyses the reaction S-ubiquitinyl-[E2 ubiquitin-conjugating enzyme]-L-cysteine + [acceptor protein]-L-lysine = [E2 ubiquitin-conjugating enzyme]-L-cysteine + N(6)-ubiquitinyl-[acceptor protein]-L-lysine.. It functions in the pathway protein modification; protein ubiquitination. Probable E3 ubiquitin-protein ligase which mediates ubiquitination and subsequent proteasomal degradation of target proteins. This Arabidopsis thaliana (Mouse-ear cress) protein is E3 ubiquitin-protein ligase UPL2 (UPL2).